Here is a 100-residue protein sequence, read N- to C-terminus: EKC/KEOPS complex subunit GON7 (100 aa).

N-acetylmethionine is present on Met1. Residues 61 to 100 (AAAPDEDLDGDDEDDAEDENNIDNRTNFDGPSAKRPKTPS) form a disordered region. Acidic residues predominate over residues 64 to 81 (PDEDLDGDDEDDAEDENN).

As to quaternary structure, component of the EKC/KEOPS complex composed of at least GON7, TP53RK, TPRKB, OSGEP and LAGE3; the whole complex dimerizes.

Its subcellular location is the nucleus. Component of the EKC/KEOPS complex that is required for the formation of a threonylcarbamoyl group on adenosine at position 37 (t(6)A37) in tRNAs that read codons beginning with adenine. The complex is probably involved in the transfer of the threonylcarbamoyl moiety of threonylcarbamoyl-AMP (TC-AMP) to the N6 group of A37. GON7 plays a supporting role to the catalytic subunit OSGEP in the complex. The protein is EKC/KEOPS complex subunit GON7 of Homo sapiens (Human).